The following is a 479-amino-acid chain: Glycogen synthase (479 aa).

K15 contributes to the ADP-alpha-D-glucose binding site.

This sequence belongs to the glycosyltransferase 1 family. Bacterial/plant glycogen synthase subfamily.

The enzyme catalyses [(1-&gt;4)-alpha-D-glucosyl](n) + ADP-alpha-D-glucose = [(1-&gt;4)-alpha-D-glucosyl](n+1) + ADP + H(+). It participates in glycan biosynthesis; glycogen biosynthesis. Functionally, synthesizes alpha-1,4-glucan chains using ADP-glucose. This is Glycogen synthase from Pectobacterium atrosepticum (strain SCRI 1043 / ATCC BAA-672) (Erwinia carotovora subsp. atroseptica).